The following is a 426-amino-acid chain: Tol-Pal system protein TolB (426 aa).

The signal sequence occupies residues Met1–Ala24.

The protein belongs to the TolB family. As to quaternary structure, the Tol-Pal system is composed of five core proteins: the inner membrane proteins TolA, TolQ and TolR, the periplasmic protein TolB and the outer membrane protein Pal. They form a network linking the inner and outer membranes and the peptidoglycan layer.

The protein resides in the periplasm. Its function is as follows. Part of the Tol-Pal system, which plays a role in outer membrane invagination during cell division and is important for maintaining outer membrane integrity. This is Tol-Pal system protein TolB from Actinobacillus pleuropneumoniae serotype 5b (strain L20).